Reading from the N-terminus, the 395-residue chain is Bifunctional enzyme IspD/IspF (395 aa).

Positions 1–237 (MRTWVLLLAA…DANEPQVTVP (237 aa)) are 2-C-methyl-D-erythritol 4-phosphate cytidylyltransferase. The tract at residues 238–395 (CVGWGYDVHR…AAVTGLRPMP (158 aa)) is 2-C-methyl-D-erythritol 2,4-cyclodiphosphate synthase. A divalent metal cation contacts are provided by aspartate 244 and histidine 246. 4-CDP-2-C-methyl-D-erythritol 2-phosphate contacts are provided by residues 244-246 (DVH) and 270-271 (HS). Histidine 278 is a binding site for a divalent metal cation. 4-CDP-2-C-methyl-D-erythritol 2-phosphate-binding positions include 292 to 294 (DIG), 297 to 301 (FPDSD), 368 to 371 (TTEE), and phenylalanine 375.

The protein in the N-terminal section; belongs to the IspD/TarI cytidylyltransferase family. IspD subfamily. This sequence in the C-terminal section; belongs to the IspF family. Requires a divalent metal cation as cofactor.

The catalysed reaction is 2-C-methyl-D-erythritol 4-phosphate + CTP + H(+) = 4-CDP-2-C-methyl-D-erythritol + diphosphate. It carries out the reaction 4-CDP-2-C-methyl-D-erythritol 2-phosphate = 2-C-methyl-D-erythritol 2,4-cyclic diphosphate + CMP. The protein operates within isoprenoid biosynthesis; isopentenyl diphosphate biosynthesis via DXP pathway; isopentenyl diphosphate from 1-deoxy-D-xylulose 5-phosphate: step 2/6. It participates in isoprenoid biosynthesis; isopentenyl diphosphate biosynthesis via DXP pathway; isopentenyl diphosphate from 1-deoxy-D-xylulose 5-phosphate: step 4/6. In terms of biological role, bifunctional enzyme that catalyzes the formation of 4-diphosphocytidyl-2-C-methyl-D-erythritol from CTP and 2-C-methyl-D-erythritol 4-phosphate (MEP) (IspD), and catalyzes the conversion of 4-diphosphocytidyl-2-C-methyl-D-erythritol 2-phosphate (CDP-ME2P) to 2-C-methyl-D-erythritol 2,4-cyclodiphosphate (ME-CPP) with a corresponding release of cytidine 5-monophosphate (CMP) (IspF). The chain is Bifunctional enzyme IspD/IspF from Nitratidesulfovibrio vulgaris (strain ATCC 29579 / DSM 644 / CCUG 34227 / NCIMB 8303 / VKM B-1760 / Hildenborough) (Desulfovibrio vulgaris).